The sequence spans 125 residues: NYHPASEKVQALDEKILLLRPAFQYRDNIAKEYENKFKNQTTLKVEQILQNQGYKVINVDSSDKDDLSFAQKKEGYLAVAMNGEIVLRPDPKRTIQKKSEPGLLFSTGLDKMEGVLIPAGFVKVT.

An N-acetyl-neuraminyl-alpha(2,3)-lactose binding motif region spans residues 92-97 (KRTIQK).

The protein resides in the cell outer membrane. The chain is Neuraminyllactose-binding hemagglutinin (hpaA) from Helicobacter pylori (Campylobacter pylori).